Here is a 294-residue protein sequence, read N- to C-terminus: uncharacterized protein (294 aa).

This is an uncharacterized protein from Diadromus pulchellus idnoreovirus 1 (DpIRV-1).